Here is a 261-residue protein sequence, read N- to C-terminus: High-affinity zinc uptake system membrane protein ZnuB (261 aa).

Residues 1–7 (MIELLFP) lie on the Periplasmic side of the membrane. The chain crosses the membrane as a helical span at residues 8-28 (GWLAGIMLACAAGPLGSFVVW). At 29–53 (RRMSYFGDTLAHASLLGVAFGLLLD) the chain is on the cytoplasmic side. Residues 54–74 (VNPFYAVIAVTLLLAGGLVWL) form a helical membrane-spanning segment. At 75-83 (EKRPQLAID) the chain is on the periplasmic side. Residues 84–104 (TLLGIMAHSALSLGLVVVSLM) form a helical membrane-spanning segment. Residues 105–121 (SNIRVDLMAYLFGDLLA) lie on the Cytoplasmic side of the membrane. A helical membrane pass occupies residues 122 to 142 (VTPEDLISIAIGVVIVVAILF). Residues 143-177 (WQWRNLLSMTISPDLAFVDGVKLQRVKLLLMLVTA) are Periplasmic-facing. Residues 178–198 (LTIGVAMKFVGALIITSLLII) form a helical membrane-spanning segment. Residues 199-213 (PAATARRFARTPEQM) are Cytoplasmic-facing. Residues 214–234 (AGVAVLVGMVAVTGGLTFSAV) form a helical membrane-spanning segment. Position 235 (Y235) is a topological domain, periplasmic. A helical transmembrane segment spans residues 236–256 (DTPAGPSVVLCAALLFILSMM). At 257–261 (KKQAS) the chain is on the cytoplasmic side.

This sequence belongs to the ABC-3 integral membrane protein family.

It is found in the cell inner membrane. Its function is as follows. Involved in the high-affinity zinc uptake transport system. The protein is High-affinity zinc uptake system membrane protein ZnuB (znuB) of Escherichia coli (strain K12).